Consider the following 83-residue polypeptide: Putative cytochrome b5 B11H24.095 (83 aa).

The Cytochrome b5 heme-binding domain maps to 2–78 (SQTFTKSQVA…GTKLKVGTLA (77 aa)). Residues histidine 37 and histidine 60 each contribute to the heme site.

Belongs to the cytochrome b5 family.

The sequence is that of Putative cytochrome b5 B11H24.095 from Neurospora crassa (strain ATCC 24698 / 74-OR23-1A / CBS 708.71 / DSM 1257 / FGSC 987).